The following is a 207-amino-acid chain: Outer-membrane lipoprotein LolB (207 aa).

A signal peptide spans 1-21; it reads MPIRKVSLLRLIPLASLVLAA. Cys-22 is lipidated: N-palmitoyl cysteine. Cys-22 carries S-diacylglycerol cysteine lipidation.

It belongs to the LolB family. As to quaternary structure, monomer.

The protein localises to the cell outer membrane. In terms of biological role, plays a critical role in the incorporation of lipoproteins in the outer membrane after they are released by the LolA protein. The polypeptide is Outer-membrane lipoprotein LolB (Serratia proteamaculans (strain 568)).